A 208-amino-acid chain; its full sequence is N-(5'-phosphoribosyl)anthranilate isomerase (208 aa).

The protein belongs to the TrpF family.

It catalyses the reaction N-(5-phospho-beta-D-ribosyl)anthranilate = 1-(2-carboxyphenylamino)-1-deoxy-D-ribulose 5-phosphate. It participates in amino-acid biosynthesis; L-tryptophan biosynthesis; L-tryptophan from chorismate: step 3/5. This chain is N-(5'-phosphoribosyl)anthranilate isomerase, found in Neisseria meningitidis serogroup C / serotype 2a (strain ATCC 700532 / DSM 15464 / FAM18).